Here is a 331-residue protein sequence, read N- to C-terminus: Trans-O-hydroxybenzylidenepyruvate hydratase-aldolase (331 aa).

This sequence belongs to the DapA family.

The enzyme catalyses (3E)-4-(2-hydroxyphenyl)-2-oxobut-3-enoate + H2O = salicylaldehyde + pyruvate. It participates in aromatic compound metabolism; naphthalene degradation. Functionally, involved in the naphthalene upper catabolic pathway. Catalyzes the transformation of trans-O-hydroxybenzylidenepyruvate (THBPA) to salicylaldehyde and pyruvate. The reaction is reversible. Can also use substrate which carry trans-alpha,beta-unsaturated keto acid side chain and adjacent hydroxyl group such as trans-4-(3-hydroxy-2-thianaphthenyl)-2-oxo-but-3-enoate, trans-4-(3-hydroxy-2-benzofuranyl)-2-oxobut-3-enoate, and trans-4-(3-hydroxy-2-thienyl)-2-oxobut-3-enoate. The chain is Trans-O-hydroxybenzylidenepyruvate hydratase-aldolase (nahE) from Pseudomonas putida (Arthrobacter siderocapsulatus).